The following is a 390-amino-acid chain: 5-hydroxytryptamine receptor 1B (390 aa).

At 1 to 46 (MEEPGAQCAPPLAAGSQIAVPQANLSAAHSHNCSAEGYIYQDSIAL) the chain is on the extracellular side. Asn24 and Asn32 each carry an N-linked (GlcNAc...) asparagine glycan. The chain crosses the membrane as a helical span at residues 47–72 (PWKVLLVLLLALFTLATTLSNAFVVA). Residues 73–86 (TVYRTRKLHTPANY) lie on the Cytoplasmic side of the membrane. The helical transmembrane segment at 87–111 (LIASLAVTDLLVSILVMPISTMYTV) threads the bilayer. Over 112-119 (TGRWTLGQ) the chain is Extracellular. A helical transmembrane segment spans residues 120–145 (VVCDLWLSSDITCCTASIMHLCVIAL). The cysteines at positions 122 and 199 are disulfide-linked. Ergotamine is bound by residues Asp129 and Thr134. A DRY motif; important for ligand-induced conformation changes and signaling motif is present at residues 146-148 (DRY). Topologically, residues 146-165 (DRYWAITDAVEYSAKRTPKR) are cytoplasmic. The helical transmembrane segment at 166 to 184 (AAIMIRLVWVFSICISLPP) threads the bilayer. Over 185-205 (FFWRQAKAEEEVSECLVNTDH) the chain is Extracellular. Val201 provides a ligand contact to ergotamine. Residues 206 to 229 (VLYTVYSTVGAFYLPTLLLIALYG) traverse the membrane as a helical segment. Topologically, residues 230 to 315 (RIYVEARSRI…AARERKATKT (86 aa)) are cytoplasmic. The segment covering 260–272 (SPGSTTSVTSINS) has biased composition (polar residues). The interval 260–282 (SPGSTTSVTSINSRAPDVPSESG) is disordered. The helical transmembrane segment at 316 to 337 (LGIILGVFIVCWLPFFIISLVM) threads the bilayer. Over 338-347 (PICKDACWFH) the chain is Extracellular. The helical transmembrane segment at 348–370 (QAIFDFFTWLGYVNSLINPIIYT) threads the bilayer. The short motif at 365-369 (NPIIY) is the NPxxY motif; important for ligand-induced conformation changes and signaling element. The Cytoplasmic portion of the chain corresponds to 371–390 (MSNEDFKQAFHKLIRFKCTS). The S-palmitoyl cysteine moiety is linked to residue Cys388.

Belongs to the G-protein coupled receptor 1 family. In terms of assembly, homodimer. Heterodimer with HTR1D. In terms of processing, phosphorylated. Desensitization of the receptor may be mediated by its phosphorylation. Post-translationally, palmitoylated.

The protein resides in the cell membrane. G-protein coupled receptor for 5-hydroxytryptamine (serotonin). Also functions as a receptor for ergot alkaloid derivatives, various anxiolytic and antidepressant drugs and other psychoactive substances, such as lysergic acid diethylamide (LSD). Ligand binding causes a conformation change that triggers signaling via guanine nucleotide-binding proteins (G proteins) and modulates the activity of downstream effectors, such as adenylate cyclase. HTR1B is coupled to G(i)/G(o) G alpha proteins and mediates inhibitory neurotransmission by inhibiting adenylate cyclase activity. Arrestin family members inhibit signaling via G proteins and mediate activation of alternative signaling pathways. Regulates the release of 5-hydroxytryptamine, dopamine and acetylcholine in the brain, and thereby affects neural activity, nociceptive processing, pain perception, mood and behavior. Besides, plays a role in vasoconstriction of cerebral arteries. The polypeptide is 5-hydroxytryptamine receptor 1B (HTR1B) (Oryctolagus cuniculus (Rabbit)).